Reading from the N-terminus, the 244-residue chain is Ureidoacrylate amidohydrolase RutB (244 aa).

Catalysis depends on Asp-38, which acts as the Proton acceptor. The active site involves Lys-147. The Nucleophile role is filled by Cys-180.

Belongs to the isochorismatase family. RutB subfamily.

The enzyme catalyses (Z)-3-ureidoacrylate + H2O + H(+) = (Z)-3-aminoacrylate + NH4(+) + CO2. It catalyses the reaction (Z)-3-ureidoacrylate + H2O = (Z)-3-aminoacrylate + carbamate + H(+). The catalysed reaction is (Z)-2-methylureidoacrylate + H2O + H(+) = (Z)-2-methylaminoacrylate + NH4(+) + CO2. Hydrolyzes ureidoacrylate to form aminoacrylate and carbamate. The carbamate hydrolyzes spontaneously, thereby releasing one of the nitrogen atoms of the pyrimidine ring as ammonia and one of its carbon atoms as CO2. This Escherichia coli O1:K1 / APEC protein is Ureidoacrylate amidohydrolase RutB.